We begin with the raw amino-acid sequence, 493 residues long: Cysteine--tRNA ligase (493 aa).

Cys-31 is a binding site for Zn(2+). A 'HIGH' region motif is present at residues 33-43 (PTVYGDAHLGH). Zn(2+) is bound by residues Cys-226, His-251, and Glu-255. The short motif at 283-287 (KMGKS) is the 'KMSKS' region element. Lys-286 lines the ATP pocket.

Belongs to the class-I aminoacyl-tRNA synthetase family. As to quaternary structure, monomer. Zn(2+) serves as cofactor.

The protein localises to the cytoplasm. The catalysed reaction is tRNA(Cys) + L-cysteine + ATP = L-cysteinyl-tRNA(Cys) + AMP + diphosphate. This is Cysteine--tRNA ligase from Phocaeicola vulgatus (strain ATCC 8482 / DSM 1447 / JCM 5826 / CCUG 4940 / NBRC 14291 / NCTC 11154) (Bacteroides vulgatus).